We begin with the raw amino-acid sequence, 238 residues long: CFA/I fimbrial subunit A (238 aa).

An N-terminal signal peptide occupies residues 1-19 (MHKLFYLLSLLMAPFVANA).

The protein localises to the fimbrium. In terms of biological role, might function as a shuttle protein in the transport of fimbria through the periplasmic space or might function as an adhesin. The polypeptide is CFA/I fimbrial subunit A (cfaA) (Escherichia coli).